The primary structure comprises 191 residues: Peptidyl-tRNA hydrolase (191 aa).

A tRNA-binding site is contributed by Tyr-14. The Proton acceptor role is filled by His-19. The tRNA site is built by Tyr-65, Asn-67, and Asn-113.

This sequence belongs to the PTH family. Monomer.

Its subcellular location is the cytoplasm. The enzyme catalyses an N-acyl-L-alpha-aminoacyl-tRNA + H2O = an N-acyl-L-amino acid + a tRNA + H(+). Functionally, hydrolyzes ribosome-free peptidyl-tRNAs (with 1 or more amino acids incorporated), which drop off the ribosome during protein synthesis, or as a result of ribosome stalling. Its function is as follows. Catalyzes the release of premature peptidyl moieties from peptidyl-tRNA molecules trapped in stalled 50S ribosomal subunits, and thus maintains levels of free tRNAs and 50S ribosomes. The protein is Peptidyl-tRNA hydrolase of Nitrosospira multiformis (strain ATCC 25196 / NCIMB 11849 / C 71).